Here is a 184-residue protein sequence, read N- to C-terminus: Cbp/p300-interacting transactivator 4 (184 aa).

Residues Pro-18–Ala-28 show a composition bias toward low complexity. 2 disordered regions span residues Pro-18 to Phe-67 and Thr-94 to Ala-128. A compositionally biased stretch (pro residues) spans Pro-104–Ala-126.

This sequence belongs to the CITED family. As to quaternary structure, interacts via its C-terminal region with the CH1 domain of CREBBP and EP300. Interacts with all TFAP2/AP-2 isoforms. In terms of tissue distribution, expressed in most tissues examined with highest levels of expression in heart, liver, skeletal muscle and pancreas. Also expressed in bladder cell line ECV-304 and in various breast cancer cell lines. Also detected in both in situ and invasive breast tumors where its expression is down-regulated and mostly restricted to the cytoplasm of malignant epithelium. Down-regulation of expression is associated with elevated levels of HIF1A and increased tumor growth and angiogenesis.

It is found in the nucleus. Its subcellular location is the cytoplasm. Acts as a transcriptional coactivator for TFAP2/AP-2. Enhances estrogen-dependent transactivation mediated by estrogen receptors. May function as an inhibitor of transactivation by HIF1A by disrupting HIF1A interaction with CREBBP. May be involved in regulation of gene expression during development and differentiation of blood cells, endothelial cells and mammary epithelial cells. The protein is Cbp/p300-interacting transactivator 4 of Homo sapiens (Human).